Consider the following 351-residue polypeptide: MEEAETDATENKRASEAKRASAMLPPPPPPISPPALIPAPAAGEEGPASLAQAGAPGCSRSRPPELEPERSLGRLRGRFEDYDEELEEDEEMEEEEEEEEEMSHFSLRLESGRADSEDEEERLINLVELTPYILCSICKGYLIDATTITECLHTFCKSCIVRHFYYSNRCPKCNIVVHQTQPLYNIRLDRQLQDIVYKLVVNLEEREKKQMHDFYKERGLEVPKPAVPQPVPASKGRTKKALESVFRIPPELDVSLLLEFIGANEDTGHFKPLEKKFVRVSGEATIGHVEKFLRRKMGLDPACQVDIICGDHLLERYQTLREIRRAIGDTAMQDGLLVLHYGLVVSPLKIT.

Residues methionine 1 to alanine 114 are disordered. Basic and acidic residues predominate over residues threonine 9 to arginine 19. Positions leucine 24–isoleucine 37 are enriched in pro residues. At serine 32 the chain carries Phosphoserine. Positions proline 38 to alanine 51 are enriched in low complexity. Residues arginine 62–glutamate 80 are compositionally biased toward basic and acidic residues. Positions glutamate 69–glutamate 110 form a coiled coil. A compositionally biased stretch (acidic residues) spans aspartate 81–glutamate 101. The residue at position 116 (serine 116) is a Phosphoserine. The RING-type zinc-finger motif lies at cysteine 135–asparagine 174. Glycyl lysine isopeptide (Lys-Gly) (interchain with G-Cter in SUMO2) cross-links involve residues lysine 224 and lysine 235.

As to quaternary structure, component of a PRC1-like complex. Interacts with BMI1/PCGF4, RING1 and RNF2. Interacts with KDM5D. Interacts with CBX4, CBX6, CBX7 and CBX8. Post-translationally, phosphorylated during mitosis.

Its subcellular location is the nucleus. Functionally, transcriptional repressor. May modulate the levels of histone H3K4Me3 by activating KDM5D histone demethylase. Component of a Polycomb group (PcG) multiprotein PRC1-like complex, a complex class required to maintain the transcriptionally repressive state of many genes, including Hox genes, throughout development. PcG PRC1 complex acts via chromatin remodeling and modification of histones; it mediates monoubiquitination of histone H2A 'Lys-119', rendering chromatin heritably changed in its expressibility. Within the PRC1-like complex, regulates RNF2 ubiquitin ligase activity. This Rattus norvegicus (Rat) protein is Polycomb group RING finger protein 6 (Pcgf6).